Here is a 523-residue protein sequence, read N- to C-terminus: Succinate-semialdehyde dehydrogenase, mitochondrial (523 aa).

The N-terminal 35 residues, 1-35 (MATCFLLRSFWAARPALPPPGRFRPEPAGTPRRSY), are a transit peptide targeting the mitochondrion. At K74 the chain carries N6-acetyllysine. An N6-acetyllysine; alternate modification is found at K114. K114 carries the post-translational modification N6-succinyllysine; alternate. At K123 the chain carries N6-succinyllysine. K128 bears the N6-acetyllysine mark. K172 is modified (N6-succinyllysine). Residues R201 and 216–219 (KPAE) each bind NAD(+). R201 lines the substrate pocket. K253 carries the post-translational modification N6-acetyllysine; alternate. The residue at position 253 (K253) is an N6-succinyllysine; alternate. 272 to 277 (GSTATG) serves as a coordination point for NAD(+). The active-site Proton acceptor is the E294. R322 is a binding site for substrate. C328 (nucleophile) is an active-site residue. C328 and C330 are joined by a disulfide. K347 is subject to N6-acetyllysine; alternate. K347 carries the N6-succinyllysine; alternate modification. Position 353 is an N6-acetyllysine (K353). K390 bears the N6-succinyllysine mark. K399 is subject to N6-acetyllysine. A Phosphoserine modification is found at S403. S486 is a binding site for substrate. S487 is modified (phosphoserine).

This sequence belongs to the aldehyde dehydrogenase family. Homotetramer.

It is found in the mitochondrion. The catalysed reaction is succinate semialdehyde + NAD(+) + H2O = succinate + NADH + 2 H(+). It functions in the pathway amino-acid degradation; 4-aminobutanoate degradation. Its activity is regulated as follows. Redox-regulated. Inhibited under oxydizing conditions. Its function is as follows. Catalyzes one step in the degradation of the inhibitory neurotransmitter gamma-aminobutyric acid (GABA). This is Succinate-semialdehyde dehydrogenase, mitochondrial (Aldh5a1) from Mus musculus (Mouse).